Here is a 564-residue protein sequence, read N- to C-terminus: NAD-dependent malic enzyme (564 aa).

Catalysis depends on Tyr-104, which acts as the Proton donor. Position 157 (Arg-157) interacts with NAD(+). The Proton acceptor role is filled by Lys-175. The a divalent metal cation site is built by Glu-246, Asp-247, and Asp-270. The NAD(+) site is built by Asp-270 and Asn-417.

It belongs to the malic enzymes family. In terms of assembly, homotetramer. Mg(2+) serves as cofactor. It depends on Mn(2+) as a cofactor.

It carries out the reaction (S)-malate + NAD(+) = pyruvate + CO2 + NADH. The catalysed reaction is oxaloacetate + H(+) = pyruvate + CO2. In Aeromonas hydrophila subsp. hydrophila (strain ATCC 7966 / DSM 30187 / BCRC 13018 / CCUG 14551 / JCM 1027 / KCTC 2358 / NCIMB 9240 / NCTC 8049), this protein is NAD-dependent malic enzyme.